Here is a 382-residue protein sequence, read N- to C-terminus: Flap endonuclease 1-B (382 aa).

The interval Met-1 to Arg-104 is N-domain. Asp-34 provides a ligand contact to Mg(2+). 2 residues coordinate DNA: Arg-47 and Arg-70. Mg(2+)-binding residues include Asp-86, Glu-158, Glu-160, Asp-179, and Asp-181. Residues Asn-122 to His-253 are I-domain. Residue Glu-158 participates in DNA binding. 2 residues coordinate DNA: Gly-231 and Asp-233. Residue Asp-233 participates in Mg(2+) binding. Positions Thr-336–Phe-344 are interaction with PCNA. A disordered region spans residues Ser-352–Lys-382.

This sequence belongs to the XPG/RAD2 endonuclease family. FEN1 subfamily. As to quaternary structure, interacts with PCNA. Three molecules of fen1 bind to one PCNA trimer with each molecule binding to one PCNA monomer. PCNA stimulates the nuclease activity without altering cleavage specificity. Mg(2+) serves as cofactor. Post-translationally, phosphorylated. Phosphorylation upon DNA damage induces relocalization to the nuclear plasma.

It localises to the nucleus. The protein resides in the nucleolus. It is found in the nucleoplasm. Its subcellular location is the mitochondrion. Structure-specific nuclease with 5'-flap endonuclease and 5'-3' exonuclease activities involved in DNA replication and repair. During DNA replication, cleaves the 5'-overhanging flap structure that is generated by displacement synthesis when DNA polymerase encounters the 5'-end of a downstream Okazaki fragment. It enters the flap from the 5'-end and then tracks to cleave the flap base, leaving a nick for ligation. Also involved in the long patch base excision repair (LP-BER) pathway, by cleaving within the apurinic/apyrimidinic (AP) site-terminated flap. Acts as a genome stabilization factor that prevents flaps from equilibrating into structures that lead to duplications and deletions. Also possesses 5'-3' exonuclease activity on nicked or gapped double-stranded DNA, and exhibits RNase H activity. Also involved in replication and repair of rDNA and in repairing mitochondrial DNA. The chain is Flap endonuclease 1-B (fen1-b) from Xenopus laevis (African clawed frog).